A 352-amino-acid chain; its full sequence is F-box/kelch-repeat protein At1g57790 (352 aa).

Residues 10–56 (KNLWKDLPLELLSSVMTFLEIKDNVRASVVCKSWFEAAVSVRVIDKS) enclose the F-box domain. 2 Kelch repeats span residues 148–189 (VVFT…HNNV) and 190–234 (VFSN…WNEG).

This Arabidopsis thaliana (Mouse-ear cress) protein is F-box/kelch-repeat protein At1g57790.